We begin with the raw amino-acid sequence, 241 residues long: Homeobox protein TGIF2LX (241 aa).

2 disordered regions span residues 1-58 and 126-210; these read MEAA…GNLP and TGKD…SPEE. Positions 21–39 are enriched in polar residues; the sequence is AKTQSPAQDTSIMSRNNAD. The segment at residues 48–111 is a DNA-binding region (homeobox; TALE-type); it reads EHKKKRKGNL…INARRRILPD (64 aa). Low complexity predominate over residues 195–206; that stretch reads VSVTSPSSPELV.

The protein belongs to the TALE/TGIF homeobox family. Specifically expressed in adult testis.

The protein resides in the nucleus. May have a transcription role in testis. The sequence is that of Homeobox protein TGIF2LX (TGIF2LX) from Homo sapiens (Human).